Reading from the N-terminus, the 170-residue chain is Cathelicidin antimicrobial peptide (170 aa).

The signal sequence occupies residues 1 to 30 (MDTQRDSPSLGRWSLVLLLLGLVMPLAIVA). The propeptide at 31–131 (QVLSYQEAVL…DISCDKDNRR (101 aa)) is cathelin-like domain (CLD). Disulfide bonds link Cys-86-Cys-97 and Cys-108-Cys-125. Positions 150-162 (FKRIVQRIKDFLQ) are active core.

Belongs to the cathelicidin family. In terms of assembly, monomer, homodimer or homotrimer (in vitro). Oligomerizes as tetra- or hexamer in solution (in vitro). Post-translationally, proteolytically cleaved by proteinase PRTN3 into antibacterial peptide LL-37. Proteolytically cleaved by cathepsin CTSG and neutrophil elastase ELANE. In terms of processing, resistant to proteolytic degradation in solution, and when bound to both zwitterionic (mimicking mammalian membranes) and negatively charged membranes (mimicking bacterial membranes). After secretion onto the skin surface, the CAMP gene product is processed by a serine protease-dependent mechanism into multiple novel antimicrobial peptides distinct from and shorter than cathelicidin LL-37. These peptides show enhanced antimicrobial action, acquiring the ability to kill skin pathogens such as S.aureus, E.coli and C.albicans. These peptides have lost the ability to stimulate CXCL8/IL8 release from keratinocytes. The peptides act synergistically, killing bacteria at lower concentrations when present together, and maintain activity at increased salt condition.

Its subcellular location is the secreted. It is found in the vesicle. Its function is as follows. Antimicrobial protein that is an integral component of the innate immune system. Binds to bacterial lipopolysaccharides (LPS). Acts via neutrophil N-formyl peptide receptors to enhance the release of CXCL2. Postsecretory processing generates multiple cathelicidin antimicrobial peptides with various lengths which act as a topical antimicrobial defense in sweat on skin. The unprocessed precursor form, cathelicidin antimicrobial peptide, inhibits the growth of Gram-negative E.coli and E.aerogenes with efficiencies comparable to that of the mature peptide LL-37 (in vitro). In terms of biological role, antimicrobial peptide that is an integral component of the innate immune system. Binds to bacterial lipopolysaccharides (LPS). Causes membrane permeabilization by forming transmembrane pores (in vitro). Causes lysis of E.coli. Exhibits antimicrobial activity against Gram-negative bacteria such as P.aeruginosa, S.typhimurium, E.aerogenes, E.coli and P.syringae, Gram-positive bacteria such as L.monocytogenes, S.epidermidis, S.pyogenes and S.aureus, as well as vancomycin-resistant enterococci (in vitro). Exhibits antimicrobial activity against methicillin-resistant S.aureus, P.mirabilis, and C.albicans in low-salt media, but not in media containing 100 mM NaCl (in vitro). Forms chiral supramolecular assemblies with quinolone signal (PQS) molecules of P.aeruginosa, which may lead to interference of bacterial quorum signaling and perturbance of bacterial biofilm formation. May form supramolecular fiber-like assemblies on bacterial membranes. Induces cytokine and chemokine producation as well as TNF/TNFA and CSF2/GMCSF production in normal human keratinocytes. Exhibits hemolytic activity against red blood cells. Functionally, exhibits antimicrobial activity against E.coli and B.megaterium (in vitro). This chain is Cathelicidin antimicrobial peptide, found in Nomascus leucogenys (Northern white-cheeked gibbon).